Consider the following 95-residue polypeptide: Citrate lyase acyl carrier protein (95 aa).

S14 is subject to O-(phosphoribosyl dephospho-coenzyme A)serine.

This sequence belongs to the CitD family. Oligomer with a subunit composition of (alpha,beta,gamma)6.

The protein resides in the cytoplasm. Its function is as follows. Covalent carrier of the coenzyme of citrate lyase. This is Citrate lyase acyl carrier protein from Haemophilus influenzae (strain PittGG).